The chain runs to 350 residues: Atypical chemokine receptor 4 (350 aa).

The Extracellular segment spans residues 1–42 (MALEQNQSTDYYYEENEMNGTYDYSQYELICIKEDVREFAKV). Asn-6 and Asn-19 each carry an N-linked (GlcNAc...) asparagine glycan. Residues 43–63 (FLPVFLTIVFVIGLAGNSMVV) traverse the membrane as a helical segment. The Cytoplasmic portion of the chain corresponds to 64–87 (AIYAYYKKQRTKTDVYILNLAVAD). A helical membrane pass occupies residues 88 to 108 (LLLLFTLPFWAVNAVHGWVLG). Residues 109–113 (KIMCK) are Extracellular-facing. Cys-112 and Cys-184 are joined by a disulfide. Residues 114–134 (ITSALYTLNFVSGMQFLACIS) form a helical membrane-spanning segment. Topologically, residues 135-154 (IDRYVAVTKVPSQSGVGKPC) are cytoplasmic. Residues 155-175 (WIICFCVWMAAILLSIPQLVF) traverse the membrane as a helical segment. At 176–201 (YTVNDNARCIPIFPRYLGTSMKALIQ) the chain is on the extracellular side. A helical transmembrane segment spans residues 202–222 (MLEICIGFVVPFLIMGVCYFI). At 223-240 (TARTLMKMPNIKISRPLK) the chain is on the cytoplasmic side. A helical membrane pass occupies residues 241–261 (VLLTVVIVFIVTQLPYNIVKF). Over 262 to 289 (CRAIDIIYSLITSCNMSKRMDIAIQVTE) the chain is Extracellular. The chain crosses the membrane as a helical span at residues 290–310 (SIALFHSCLNPILYVFMGASF). Residues 311–350 (KNYVMKVAKKYGSWRRQRQSVEEFPFDSEGPTEPTSTFSI) lie on the Cytoplasmic side of the membrane.

The protein belongs to the G-protein coupled receptor 1 family. Atypical chemokine receptor subfamily. Forms heteromers with CXCR3. Interacts with ARRB1 and ARRB2. Post-translationally, the Ser/Thr residues in the C-terminal cytoplasmic tail may be phosphorylated. As to expression, predominantly expressed in heart. Lower expression in lung, pancreas, spleen, colon, skeletal muscle and small intestine.

It localises to the early endosome. Its subcellular location is the recycling endosome. The protein localises to the cell membrane. Functionally, atypical chemokine receptor that controls chemokine levels and localization via high-affinity chemokine binding that is uncoupled from classic ligand-driven signal transduction cascades, resulting instead in chemokine sequestration, degradation, or transcytosis. Also known as interceptor (internalizing receptor) or chemokine-scavenging receptor or chemokine decoy receptor. Acts as a receptor for chemokines CCL2, CCL8, CCL13, CCL19, CCL21 and CCL25. Chemokine-binding does not activate G-protein-mediated signal transduction but instead induces beta-arrestin recruitment, leading to ligand internalization. Plays an important role in controlling the migration of immune and cancer cells that express chemokine receptors CCR7 and CCR9, by reducing the availability of CCL19, CCL21, and CCL25 through internalization. Negatively regulates CXCR3-induced chemotaxis. Regulates T-cell development in the thymus. In Homo sapiens (Human), this protein is Atypical chemokine receptor 4 (ACKR4).